A 225-amino-acid chain; its full sequence is NAD(P)H-quinone oxidoreductase subunit K, chloroplastic (225 aa).

4 residues coordinate [4Fe-4S] cluster: cysteine 43, cysteine 44, cysteine 108, and cysteine 139.

This sequence belongs to the complex I 20 kDa subunit family. In terms of assembly, NDH is composed of at least 16 different subunits, 5 of which are encoded in the nucleus. Requires [4Fe-4S] cluster as cofactor.

It is found in the plastid. Its subcellular location is the chloroplast thylakoid membrane. The catalysed reaction is a plastoquinone + NADH + (n+1) H(+)(in) = a plastoquinol + NAD(+) + n H(+)(out). It carries out the reaction a plastoquinone + NADPH + (n+1) H(+)(in) = a plastoquinol + NADP(+) + n H(+)(out). Functionally, NDH shuttles electrons from NAD(P)H:plastoquinone, via FMN and iron-sulfur (Fe-S) centers, to quinones in the photosynthetic chain and possibly in a chloroplast respiratory chain. The immediate electron acceptor for the enzyme in this species is believed to be plastoquinone. Couples the redox reaction to proton translocation, and thus conserves the redox energy in a proton gradient. The protein is NAD(P)H-quinone oxidoreductase subunit K, chloroplastic of Amborella trichopoda.